The following is a 663-amino-acid chain: Alpha-amylase MalA (663 aa).

2 disordered regions span residues 1 to 28 and 80 to 135; these read MHHPGPPRFVATGDEVELAPRDPDPTAT and GTLE…LTLR. Positions 92-111 are enriched in gly residues; it reads RSGGHSGGVSGGRSGPGRSG. The active-site Nucleophile is the Asp-411. The active-site Proton donor is Glu-440.

The protein belongs to the glycosyl hydrolase 13 family.

It is found in the cytoplasm. The catalysed reaction is Endohydrolysis of (1-&gt;4)-alpha-D-glucosidic linkages in polysaccharides containing three or more (1-&gt;4)-alpha-linked D-glucose units.. It functions in the pathway glycan degradation; starch degradation. Stable and active over a broad range of NaCl concentrations (0.5 to 4.2 M NaCl), with maximal activity at 2.6 M NaCl. 83% and 94% of the maximum activity at 0.6 and 4.2 M NaCl, respectively. Active and stable also in KCl. Functionally, alpha-amylase that cleaves starch into oligosaccharides, the first step in starch degradation. Endo-acting enzyme which prefers a linear polysaccharide to branched polysaccharides hydrolyzing alpha-1,4 glucosidic bonds efficiently. Also has transglycosylation activity, but does not act on alpha-1,6 bonds. Higher activities of 100%, 79% and 67.8% against amylose, soluble starch and amylopectin, respectively. Lower activity of 22% against glycogen and faint or no activity against alpha-, beta- and gamma-cyclodextrin. The sequence is that of Alpha-amylase MalA from Haloarcula japonica (strain ATCC 49778 / DSM 6131 / JCM 7785 / NBRC 101032 / NCIMB 13157 / TR-1).